Reading from the N-terminus, the 153-residue chain is MYFKKKYIGLIDKNCEKKILDDSSTIKICYILIGILIGTNMITLIYNFIFWDNYIKCYRNNDKMFYCPNDWVGYNNICYYFSNGSFSKNYTAASNFCRQLNGTLANNDTNLLNLTKIYNNQSMYWVNNTVILRGDNKYSQKVNYTDLLFICGK.

The Cytoplasmic segment spans residues 1 to 30; that stretch reads MYFKKKYIGLIDKNCEKKILDDSSTIKICY. Residues 31-51 traverse the membrane as a helical segment; that stretch reads ILIGILIGTNMITLIYNFIFW. Over 52 to 153 the chain is Extracellular; sequence DNYIKCYRNN…YTDLLFICGK (102 aa). Cysteine 67 and cysteine 78 are oxidised to a cystine. N-linked (GlcNAc...) asparagine; by host glycosylation is found at asparagine 83, asparagine 89, asparagine 101, asparagine 107, asparagine 113, asparagine 120, asparagine 127, and asparagine 143. Cysteine 97 and cysteine 151 are disulfide-bonded.

This sequence belongs to the asfivirus lectin-like protein family. Homodimer.

The protein resides in the host endoplasmic reticulum membrane. Its function is as follows. Down-regulates MHC-I expression by impairing the appropriate configuration or presentation into the plasma membrane of the latter. Participates in viral hemadsorption, which may help viral spread. Reduces the transactivating activity of host TP53, thus inhibiting apoptosis. Non-essential for virus growth in swine macrophage cell cultures. The sequence is that of Lectin-like protein EP153R from African swine fever virus (strain Badajoz 1971 Vero-adapted) (Ba71V).